A 432-amino-acid chain; its full sequence is MGTCLTTAEQRAMEVPAASVKGGGGRRSDEEAPGRIAGNGAGNVACLFTRQGKKGTNQDAMVAWENYNGRSDTVFCGVFDGHGPHGHLIARKVRDILPSRLCDLIYEDCGDSPTSNSDVSTLEENLSPYADAECRSPTLAGQKEHQEFFNAMKESFRKAFKNVDKELKLQRNIDSICSGTTAVTLIKQGHDLIVGNLGDSRAVLGTRDQNDKLVAHQLTVDLKPDHPREARRIRRCNGRVFAHQDEPDVARLWLPNCNSPGLAMARAFGDFCLKDFGLISVPDVTYRQITEKDEFIVLATDGVWDVLSNQEVVDVVASCSGRFAAARSVVDLANETWRFKYPTSKTDDCAVVCLFLNKYEVTGGLSGQPGYSPRMPALSGITRPNSKRVTPDDVDDGSDSNVSGDERSLDGFTRLNTLLALPKFGDTSPTKK.

The 313-residue stretch at 44–356 (VACLFTRQGK…DDCAVVCLFL (313 aa)) folds into the PPM-type phosphatase domain. D80, G81, D301, and D347 together coordinate Mn(2+). The disordered stretch occupies residues 372–408 (SPRMPALSGITRPNSKRVTPDDVDDGSDSNVSGDERS).

This sequence belongs to the PP2C family. It depends on Mg(2+) as a cofactor. Requires Mn(2+) as cofactor.

The enzyme catalyses O-phospho-L-seryl-[protein] + H2O = L-seryl-[protein] + phosphate. It catalyses the reaction O-phospho-L-threonyl-[protein] + H2O = L-threonyl-[protein] + phosphate. The polypeptide is Probable protein phosphatase 2C 75 (Oryza sativa subsp. japonica (Rice)).